Consider the following 145-residue polypeptide: Antiholin-like protein LrgA (145 aa).

Transmembrane regions (helical) follow at residues 10–30 (PAHF…SKII), 33–53 (FMPI…VLLC), 72–92 (NIGL…GVIS), and 96–116 (FLII…TGYV).

It belongs to the CidA/LrgA family. LrgA subfamily.

Its subcellular location is the cell membrane. In terms of biological role, inhibits the expression or activity of extracellular murein hydrolases by interacting, possibly with LrgB, with the holin-like proteins CidA and/or CidB. The LrgAB and CidAB proteins may affect the proton motive force of the membrane. May be involved in programmed cell death (PCD), possibly triggering PCD in response to antibiotics and environmental stresses. This is Antiholin-like protein LrgA from Staphylococcus aureus (strain Mu3 / ATCC 700698).